The sequence spans 1035 residues: Protein SEY1 homolog (1035 aa).

One can recognise a GB1/RHD3-type G domain in the interval 32 to 267 (DGTFICVSVF…TTLIPLTDSS (236 aa)). Residue 42-49 (GPQSSGKS) coordinates GTP.

This sequence belongs to the TRAFAC class dynamin-like GTPase superfamily. GB1/RHD3 GTPase family. RHD3 subfamily.

It is found in the endoplasmic reticulum membrane. Its function is as follows. Probable GTP-binding protein that may be involved in cell development. The polypeptide is Protein SEY1 homolog (Giardia intestinalis (strain ATCC 50803 / WB clone C6) (Giardia lamblia)).